The primary structure comprises 874 residues: Protein translocase subunit SecA (874 aa).

ATP is bound by residues glutamine 85, glycine 103–threonine 107, and aspartate 492. Residues glutamate 839–arginine 854 show a composition bias toward basic and acidic residues. Residues glutamate 839–lysine 864 form a disordered region. Residues cysteine 858, cysteine 860, cysteine 869, and cysteine 870 each contribute to the Zn(2+) site.

The protein belongs to the SecA family. Monomer and homodimer. Part of the essential Sec protein translocation apparatus which comprises SecA, SecYEG and auxiliary proteins SecDF. Other proteins may also be involved. Requires Zn(2+) as cofactor.

It localises to the cell membrane. The protein localises to the cytoplasm. It carries out the reaction ATP + H2O + cellular proteinSide 1 = ADP + phosphate + cellular proteinSide 2.. Functionally, part of the Sec protein translocase complex. Interacts with the SecYEG preprotein conducting channel. Has a central role in coupling the hydrolysis of ATP to the transfer of proteins into and across the cell membrane, serving as an ATP-driven molecular motor driving the stepwise translocation of polypeptide chains across the membrane. The sequence is that of Protein translocase subunit SecA from Carboxydothermus hydrogenoformans (strain ATCC BAA-161 / DSM 6008 / Z-2901).